The following is a 251-amino-acid chain: uncharacterized protein (251 aa).

The disordered stretch occupies residues 1 to 22; the sequence is MTQLPELGLRSPNNKSPTGPHP.

This is an uncharacterized protein from Homo sapiens (Human).